A 167-amino-acid polypeptide reads, in one-letter code: Ribosome maturation factor RimM (167 aa).

The PRC barrel domain occupies 94 to 165 (ENEFYYSDII…KIIITPMEGL (72 aa)).

The protein belongs to the RimM family. Binds ribosomal protein uS19.

It localises to the cytoplasm. Functionally, an accessory protein needed during the final step in the assembly of 30S ribosomal subunit, possibly for assembly of the head region. Essential for efficient processing of 16S rRNA. May be needed both before and after RbfA during the maturation of 16S rRNA. It has affinity for free ribosomal 30S subunits but not for 70S ribosomes. This chain is Ribosome maturation factor RimM, found in Staphylococcus aureus (strain Mu3 / ATCC 700698).